A 201-amino-acid chain; its full sequence is Dermatopontin (201 aa).

The N-terminal stretch at 1–18 is a signal peptide; sequence MDLTLLWVLLPLVTVAWG. The residue at position 19 (glutamine 19) is a Pyrrolidone carboxylic acid. Tyrosine 23 carries the post-translational modification Sulfotyrosine. 4 repeat units span residues 26 to 79, 70 to 75, 80 to 135, and 125 to 130. The 2 X 53-55 AA tandem repeats stretch occupies residues 26-135; sequence SYHQYHDYSD…REWQFYCCRY (110 aa). Disulfide bonds link cysteine 50–cysteine 77, cysteine 90–cysteine 132, cysteine 106–cysteine 133, cysteine 139–cysteine 196, and cysteine 143–cysteine 189. The interval 70–186 is 3 X 6 AA tandem repeats of D-R-[EQ]-W-[NQK]-[FY]; sequence DRQWNYACMP…AVERDRQWKF (117 aa). Tyrosine 162, tyrosine 164, tyrosine 166, and tyrosine 167 each carry sulfotyrosine. The stretch at 181 to 186 is one 2-3 repeat; the sequence is DRQWKF. Tyrosine 194 is subject to Sulfotyrosine.

It belongs to the dermatopontin family. Interacts with TGFB1, DCN and collagen. In terms of processing, sulfated on tyrosine residue(s). In terms of tissue distribution, expressed in skeletal muscle, heart, pancreas, skin and cultured fibroblasts.

It localises to the secreted. The protein resides in the extracellular space. Its subcellular location is the extracellular matrix. In terms of biological role, seems to mediate adhesion by cell surface integrin binding. May serve as a communication link between the dermal fibroblast cell surface and its extracellular matrix environment. Enhances TGFB1 activity. Inhibits cell proliferation. Accelerates collagen fibril formation, and stabilizes collagen fibrils against low-temperature dissociation. The chain is Dermatopontin (DPT) from Bos taurus (Bovine).